A 44-amino-acid polypeptide reads, in one-letter code: Hyaluronidase CdtHya1 (44 aa).

It belongs to the glycosyl hydrolase 56 family. Monomer. In terms of processing, contains disulfide bonds. Glycosylated. In terms of tissue distribution, expressed by the venom gland.

Its subcellular location is the secreted. It catalyses the reaction Random hydrolysis of (1-&gt;4)-linkages between N-acetyl-beta-D-glucosamine and D-glucuronate residues in hyaluronate.. Its function is as follows. Snake venom endo-hyaluronidase that degrades hyaluronan to smaller oligosaccharide fragments. In venom, it is not toxic by itself, but increases the diffusion of other venom proteins such as crotoxin (a neurotoxic and myotoxic PLA2) by degrading the extracellular matrix. In addition, it displays antiedematogenic activity, since it significantly diminishes the oedematogenic activity of crotoxin (probably by direct substrate hydrolysis, since hyaluronan possesses strong water-binding capacity). The polypeptide is Hyaluronidase CdtHya1 (Crotalus durissus terrificus (South American rattlesnake)).